Reading from the N-terminus, the 588-residue chain is Glycoprotein (588 aa).

The signal sequence occupies residues 1-22 (MSILVIILILPILFGEVPPVNS). Topologically, residues 23–547 (GRVVDLNRNV…TTLEEEVKHG (525 aa)) are virion surface. The chain crosses the membrane as a helical span at residues 548–568 (VIIVFFTVIGLIIAVPTLKML). Residues 569–588 (LKGRRPYEPVKSPVVWGGPR) lie on the Intravirion side of the membrane.

This sequence belongs to the nucleorhabdovirus glycoprotein family. In terms of assembly, homotrimer. Interacts with matrix protein. In terms of processing, glycosylated by host. Glycosylation is crucial for glycoprotein export at the cell surface.

It localises to the virion membrane. In terms of biological role, attaches the virus to host cellular receptor, inducing endocytosis of the virion. In the endosome, the acidic pH induces conformational changes in the glycoprotein trimer, which trigger fusion between virus and cell membrane. This is Glycoprotein (G) from Taro vein chlorosis virus (TAVCV).